Reading from the N-terminus, the 428-residue chain is UPF0597 protein Dde_0807 (428 aa).

Belongs to the UPF0597 family.

This is UPF0597 protein Dde_0807 from Oleidesulfovibrio alaskensis (strain ATCC BAA-1058 / DSM 17464 / G20) (Desulfovibrio alaskensis).